A 92-amino-acid chain; its full sequence is Putative membrane protein insertion efficiency factor (92 aa).

It belongs to the UPF0161 family.

The protein localises to the cell membrane. Functionally, could be involved in insertion of integral membrane proteins into the membrane. The protein is Putative membrane protein insertion efficiency factor of Tropheryma whipplei (strain TW08/27) (Whipple's bacillus).